The sequence spans 484 residues: Hemogen (484 aa).

The segment covering 1-25 (MDLGKDQSHLKHHQTPDPHQEENHS) has biased composition (basic and acidic residues). Disordered regions lie at residues 1-32 (MDLGKDQSHLKHHQTPDPHQEENHSPEVIGTW) and 44-91 (KAEV…PQPQ). The interval 7 to 87 (QSHLKHHQTP…RQQNTELKVE (81 aa)) is necessary for nuclear localization. Positions 61 to 79 (KKRKQQRTGKGNRRGRKRQ) are enriched in basic residues. 5 positions are modified to phosphoserine: S123, S159, S181, S188, and S201. T246 is subject to Phosphothreonine. 3 disordered regions span residues 265-290 (DVPKGYILDTDQNPAEPEEYNETDQG), 306-369 (EPKD…YSPE), and 386-471 (QETS…ILNE). Over residues 306–320 (EPKDLSTKTHQESAE) the composition is skewed to basic and acidic residues. S349 and S353 each carry phosphoserine. Residue T360 is modified to Phosphothreonine. 2 positions are modified to phosphoserine: S363 and S367. Composition is skewed to basic and acidic residues over residues 413–428 (YKNKDVPKECFPEPHQ), 438–447 (PKAHQEDAKD), and 454–463 (EMKEKPKEEP).

Expressed in hematopoietic precursor cells, thyroid and spermatids (at protein level). Expressed in bone marrow, testis, thymus. Expressed in prostate cancer and ovarian cancer. Also expressed in thymus and thyroid tumors, non-Hodgkin lymphoma, various leukemia cell lines, peripheral blood mononuclear cells (PBMCs) and bone marrow mononuclear cells (BMMCs) of patients with leukemia.

The protein localises to the nucleus. Functionally, regulates the proliferation and differentiation of hematopoietic cells. Overexpression block the TPA-induced megakaryocytic differentiation in the K562 cell model. May also prevent cell apoptosis through the activation of the nuclear factor-kappa B (NF-kB). The chain is Hemogen (HEMGN) from Homo sapiens (Human).